Consider the following 334-residue polypeptide: Aspartate carbamoyltransferase catalytic subunit (334 aa).

2 residues coordinate carbamoyl phosphate: Arg71 and Thr72. Lys99 is an L-aspartate binding site. Carbamoyl phosphate is bound by residues Arg121, His151, and Gln154. Residues Arg184 and Arg239 each contribute to the L-aspartate site. 2 residues coordinate carbamoyl phosphate: Gly280 and Pro281.

The protein belongs to the aspartate/ornithine carbamoyltransferase superfamily. ATCase family. In terms of assembly, heterododecamer (2C3:3R2) of six catalytic PyrB chains organized as two trimers (C3), and six regulatory PyrI chains organized as three dimers (R2).

It carries out the reaction carbamoyl phosphate + L-aspartate = N-carbamoyl-L-aspartate + phosphate + H(+). Its pathway is pyrimidine metabolism; UMP biosynthesis via de novo pathway; (S)-dihydroorotate from bicarbonate: step 2/3. Catalyzes the condensation of carbamoyl phosphate and aspartate to form carbamoyl aspartate and inorganic phosphate, the committed step in the de novo pyrimidine nucleotide biosynthesis pathway. The sequence is that of Aspartate carbamoyltransferase catalytic subunit from Pseudomonas fluorescens biotype A.